Reading from the N-terminus, the 229-residue chain is PKHD-type hydroxylase OCAR_6723/OCA5_c13470 (229 aa).

A Fe2OG dioxygenase domain is found at 78 to 180; sequence HIFPPLFNRY…RVASFFWLQS (103 aa). Fe cation is bound by residues H98, D100, and H161. 2-oxoglutarate is bound at residue R171.

Requires Fe(2+) as cofactor. The cofactor is L-ascorbate.

This chain is PKHD-type hydroxylase OCAR_6723/OCA5_c13470, found in Afipia carboxidovorans (strain ATCC 49405 / DSM 1227 / KCTC 32145 / OM5) (Oligotropha carboxidovorans).